The chain runs to 398 residues: Elongation factor Tu (398 aa).

One can recognise a tr-type G domain in the interval 10 to 207 (KPHVNIGTIG…TVDSYIPEPE (198 aa)). Residues 19–26 (GHVDHGKT) form a G1 region. GTP is bound at residue 19 to 26 (GHVDHGKT). T26 is a Mg(2+) binding site. Residues 63–67 (GITIN) form a G2 region. The G3 stretch occupies residues 84 to 87 (DAPG). Residues 84-88 (DAPGH) and 139-142 (NKVD) contribute to the GTP site. A G4 region spans residues 139–142 (NKVD). The segment at 177-179 (SAL) is G5.

It belongs to the TRAFAC class translation factor GTPase superfamily. Classic translation factor GTPase family. EF-Tu/EF-1A subfamily. As to quaternary structure, monomer.

The protein resides in the cytoplasm. It carries out the reaction GTP + H2O = GDP + phosphate + H(+). GTP hydrolase that promotes the GTP-dependent binding of aminoacyl-tRNA to the A-site of ribosomes during protein biosynthesis. The polypeptide is Elongation factor Tu (Streptococcus pyogenes serotype M28 (strain MGAS6180)).